Reading from the N-terminus, the 349-residue chain is Heparin sulfate O-sulfotransferase (349 aa).

The Cytoplasmic segment spans residues 1–17; it reads MFRKLLKMWILLRPTHW. A helical; Signal-anchor for type II membrane protein membrane pass occupies residues 18–38; the sequence is LILIALCAVTCAGYWLLWSEI. Residues 39–349 lie on the Lumenal side of the membrane; the sequence is RLEHAFKPLS…KFMYEKIRPK (311 aa). 2 N-linked (GlcNAc...) asparagine glycosylation sites follow: asparagine 107 and asparagine 126. Catalysis depends on residues histidine 139 and histidine 141. Intrachain disulfides connect cysteine 200-cysteine 208 and cysteine 221-cysteine 227. The N-linked (GlcNAc...) asparagine glycan is linked to asparagine 282.

It belongs to the sulfotransferase 3 family. As to quaternary structure, homotrimer.

The protein resides in the golgi apparatus membrane. Its function is as follows. Catalyzes the transfer of sulfate to the C2-position of selected hexuronic acid residues within the maturing heparan sulfate (HS). The protein is Heparin sulfate O-sulfotransferase of Drosophila melanogaster (Fruit fly).